A 691-amino-acid chain; its full sequence is Elongation factor G (691 aa).

Residues 8–283 (KKVRNIGIAA…AVVAYLPAPD (276 aa)) enclose the tr-type G domain. GTP-binding positions include 17-24 (AHIDAGKT), 81-85 (DTPGH), and 135-138 (NKMD).

Belongs to the TRAFAC class translation factor GTPase superfamily. Classic translation factor GTPase family. EF-G/EF-2 subfamily.

The protein localises to the cytoplasm. Its function is as follows. Catalyzes the GTP-dependent ribosomal translocation step during translation elongation. During this step, the ribosome changes from the pre-translocational (PRE) to the post-translocational (POST) state as the newly formed A-site-bound peptidyl-tRNA and P-site-bound deacylated tRNA move to the P and E sites, respectively. Catalyzes the coordinated movement of the two tRNA molecules, the mRNA and conformational changes in the ribosome. The sequence is that of Elongation factor G from Campylobacter jejuni subsp. jejuni serotype O:6 (strain 81116 / NCTC 11828).